Reading from the N-terminus, the 678-residue chain is THO complex subunit 5 homolog A (678 aa).

2 disordered regions span residues 1–35 (MASDSLKKRKPKVNRNEDVKRGRHEDQEGRYYSEE) and 294–329 (ALFKPPEDSQDDESDSDAEEEQTTKRRRPTLGVQLD). The short motif at 7–10 (KKRK) is the Nuclear localization signal element. Over residues 14-35 (NRNEDVKRGRHEDQEGRYYSEE) the composition is skewed to basic and acidic residues. Over residues 301-314 (DSQDDESDSDAEEE) the composition is skewed to acidic residues.

The protein belongs to the THOC5 family. As to quaternary structure, component of the THO subcomplex, which is composed of thoc1, thoc2, thoc3, thoc5, thoc6 and thoc7. Component of the transcription/export (TREX) complex at least composed of alyref/thoc4, ddx39b, sarnp/cip29, chtop and the THO subcomplex. Interacts with thoc7.

Its subcellular location is the nucleus. The protein localises to the nucleus speckle. It localises to the cytoplasm. In terms of biological role, component of the THO subcomplex of the TREX complex which is thought to couple mRNA transcription, processing and nuclear export, and which specifically associates with spliced mRNA and not with unspliced pre-mRNA. Plays a key structural role in the oligomerization of the THO-ddx39b complex. TREX is recruited to spliced mRNAs by a transcription-independent mechanism, binds to mRNA upstream of the exon-junction complex (EJC) and is recruited in a splicing- and cap-dependent manner to a region near the 5' end of the mRNA where it functions in mRNA export to the cytoplasm via the TAP/NXF1 pathway. May be involved in cell differentiation. The protein is THO complex subunit 5 homolog A (thoc5-a) of Xenopus laevis (African clawed frog).